Consider the following 374-residue polypeptide: Chaperone protein DnaJ (374 aa).

A J domain is found at 5–71 (DLYAILGVCR…QKRASYDRFG (67 aa)). Residues 132–210 (GVEKQIRIAT…CQGTGRVKDT (79 aa)) form a CR-type zinc finger. The Zn(2+) site is built by Cys145, Cys148, Cys162, Cys165, Cys184, Cys187, Cys198, and Cys201. 4 CXXCXGXG motif repeats span residues 145-152 (CGECHGSG), 162-169 (CPTCNGAG), 184-191 (CPTCHGRG), and 198-205 (CNKCQGTG).

This sequence belongs to the DnaJ family. Homodimer. Requires Zn(2+) as cofactor.

It is found in the cytoplasm. Participates actively in the response to hyperosmotic and heat shock by preventing the aggregation of stress-denatured proteins and by disaggregating proteins, also in an autonomous, DnaK-independent fashion. Unfolded proteins bind initially to DnaJ; upon interaction with the DnaJ-bound protein, DnaK hydrolyzes its bound ATP, resulting in the formation of a stable complex. GrpE releases ADP from DnaK; ATP binding to DnaK triggers the release of the substrate protein, thus completing the reaction cycle. Several rounds of ATP-dependent interactions between DnaJ, DnaK and GrpE are required for fully efficient folding. Also involved, together with DnaK and GrpE, in the DNA replication of plasmids through activation of initiation proteins. The sequence is that of Chaperone protein DnaJ from Dichelobacter nodosus (strain VCS1703A).